Consider the following 471-residue polypeptide: Adenosylhomocysteinase (471 aa).

Residues T60, D135, and E196 each coordinate substrate. 197-199 (TTT) contacts NAD(+). Positions 226 and 230 each coordinate substrate. Residues N231, 260–265 (GYGDVG), E283, N318, 339–341 (IGH), and N387 contribute to the NAD(+) site.

This sequence belongs to the adenosylhomocysteinase family. It depends on NAD(+) as a cofactor.

The protein localises to the cytoplasm. The enzyme catalyses S-adenosyl-L-homocysteine + H2O = L-homocysteine + adenosine. The protein operates within amino-acid biosynthesis; L-homocysteine biosynthesis; L-homocysteine from S-adenosyl-L-homocysteine: step 1/1. In terms of biological role, may play a key role in the regulation of the intracellular concentration of adenosylhomocysteine. This chain is Adenosylhomocysteinase, found in Chlorobaculum parvum (strain DSM 263 / NCIMB 8327) (Chlorobium vibrioforme subsp. thiosulfatophilum).